Reading from the N-terminus, the 494-residue chain is NAD(+) hydrolase ThsA (494 aa).

In terms of domain architecture, Deacetylase sirtuin-type spans 11-295 (ATDKEVLIKE…TILQRYCRSK (285 aa)). Residues Ala30, Asp119, and His157 each contribute to the NAD(+) site. His157 serves as the catalytic Proton acceptor. The SLOG (STALD) domain, binds 3'cADPR stretch occupies residues 296–494 (ILISGSAVEY…KIITALRAGR (199 aa)). Residues Gly300, Ser301, Leu339, Phe370, Arg388, Lys405, Gly416, and Glu420 each coordinate 3'cADPR.

This sequence belongs to the soluble Thoeris ThsA family. As to quaternary structure, homotetramer.

The protein resides in the cytoplasm. It carries out the reaction NAD(+) + H2O = ADP-D-ribose + nicotinamide + H(+). Its activity is regulated as follows. Probably activated by a signal molecule generated by endogenous ThsB1 and/or ThsB2. Can also be activated by the signal generated by ThsB of B.cereus. The activating molecule might be 3' cyclic ADP-D-ribose (3'cADPR). Probable NAD(+) hydrolyzing component (NADase) of the Thoeris antiviral defense system, composed of ThsA, TIR1 (thsB1) and TIR2 (thsB2). Activated by a signal molecule generated by endogenous TIR1, TIR2 or ThsB from B.cereus. After activation it binds and hydrolyzes NAD(+), leading to cell death and inhibition of phage replication. Expression of Thoeris in B.subtilis (strain BEST7003) confers resistance to phages phi29, phi3T, SPBeta, SBSphi11, SBSphi13, SBSphiJ, SPO1 and SPR but not SBSphiC. The TIR paralogs confer overlapping resistance to different phages. The polypeptide is NAD(+) hydrolase ThsA (Cytobacillus dafuensis (Bacillus dafuensis)).